Here is a 234-residue protein sequence, read N- to C-terminus: Nuclear transcription factor Y subunit C-1 (234 aa).

2 disordered regions span residues 1–20 and 205–234; these read MDTN…PPPP and SVWQ…DGQG. The span at 7 to 20 shows a compositional bias: pro residues; sequence QPPPSAAGIPPPPP. The segment covering 209–219 has biased composition (low complexity); it reads TSTGTGDDVSY. Gly residues predominate over residues 220–234; the sequence is GSGGSSGQGNLDGQG.

This sequence belongs to the NFYC/HAP5 subunit family. As to quaternary structure, heterotrimeric transcription factor composed of three components, NF-YA, NF-YB and NF-YC. NF-YB and NF-YC must interact and dimerize for NF-YA association and DNA binding. As to expression, ubiquitous. Present in etiolated seedlings.

The protein resides in the nucleus. Stimulates the transcription of various genes by recognizing and binding to a CCAAT motif in promoters. The sequence is that of Nuclear transcription factor Y subunit C-1 (NFYC1) from Arabidopsis thaliana (Mouse-ear cress).